The sequence spans 611 residues: Protein halfway (611 aa).

A signal peptide spans 1–22; the sequence is MLAYTHGTWLLLLLLLVAGACA. 3 disordered regions span residues 31 to 64, 90 to 132, and 154 to 185; these read DPAA…LKED, SLAE…AAPE, and GRAE…CQCR. Residues 43-59 are compositionally biased toward basic residues; that stretch reads AHAHPQARHHHHAHPHA. Polar residues predominate over residues 90-101; the sequence is SLAETQSMSDPG. Residues 102-123 show a composition bias toward low complexity; that stretch reads SVTDTTSTSTSHSTSTTSTTSP. Residues 159–183 show a composition bias toward polar residues; sequence SEGQGSTVAQSEAQNRGGQGNSQCQ. 4 N-linked (GlcNAc...) asparagine glycosylation sites follow: Asn221, Asn246, Asn264, and Asn269. LRR repeat units lie at residues 236–257, 259–280, 283–304, and 313–334; these read SLQS…FPRL, ALKC…AVKD, HLEF…NQNK, and NMRM…NFLN. The 56-residue stretch at 361–416 folds into the LRRNT domain; the sequence is ENRKRCVTNCPVIPNYGSCNCTLENIMIIQDNQSKPQCHVDCSNLGLVELPQRLPD. LRR repeat units follow at residues 417–438, 443–464, and 468–489; these read NTFM…FHTN, NINR…EGTK, and TFQR…FLNN. The region spanning 505–554 is the LRRCT domain; sequence NKLQCDCNSAKTLQNWLKERSSDIPDYMEIRCRNMPQRVIELQEAKLCQS.

In terms of biological role, has a role in the ecdysone induced cascade; probably indirect control of 'late' ecdysone genes. This chain is Protein halfway, found in Drosophila melanogaster (Fruit fly).